We begin with the raw amino-acid sequence, 251 residues long: ATP synthase subunit a, chloroplastic (251 aa).

The next 6 membrane-spanning stretches (helical) occupy residues 3-23, 38-58, 99-119, 138-158, 203-223, and 224-244; these read IVLLYYFVNMFISGIFQIANV, IHGQVLINSWIVILIIGFLSI, VPYIGTMFLFIFVSNWSGALI, INTTAGLAILTSLAYFYAGLN, LVVAVLVSLVPLIVPVPLIFL, and GLFTSGIQALIFATLSGSYIG.

Belongs to the ATPase A chain family. As to quaternary structure, F-type ATPases have 2 components, CF(1) - the catalytic core - and CF(0) - the membrane proton channel. CF(1) has five subunits: alpha(3), beta(3), gamma(1), delta(1), epsilon(1). CF(0) has four main subunits: a, b, b' and c.

The protein resides in the plastid. It is found in the chloroplast thylakoid membrane. Key component of the proton channel; it plays a direct role in the translocation of protons across the membrane. This Euglena gracilis protein is ATP synthase subunit a, chloroplastic.